Reading from the N-terminus, the 57-residue chain is UPF0391 membrane protein BRADO2787 (57 aa).

2 helical membrane passes run 6 to 26 (WALLFFVISVVAGILGFTGVS) and 35 to 55 (ILFYIFLVIFLVLLILGLTIF).

Belongs to the UPF0391 family.

It is found in the cell membrane. The sequence is that of UPF0391 membrane protein BRADO2787 from Bradyrhizobium sp. (strain ORS 278).